A 515-amino-acid polypeptide reads, in one-letter code: Galactose/methyl galactoside import ATP-binding protein MglA (515 aa).

ABC transporter domains lie at 8 to 243 (LEMR…VGRE) and 254 to 499 (IPKE…AKYL). 40 to 47 (GENGAGKS) contributes to the ATP binding site.

The protein belongs to the ABC transporter superfamily. Galactose/methyl galactoside importer (TC 3.A.1.2.3) family. In terms of assembly, the complex is composed of one ATP-binding protein (MglA), two transmembrane proteins (MglC) and a solute-binding protein (MglB).

It localises to the cell membrane. It catalyses the reaction D-galactose(out) + ATP + H2O = D-galactose(in) + ADP + phosphate + H(+). The catalysed reaction is methyl beta-D-galactoside(out) + ATP + H2O = methyl beta-D-galactoside(in) + ADP + phosphate + H(+). Functionally, part of the ABC transporter complex MglABC involved in galactose/methyl galactoside import. Responsible for energy coupling to the transport system. The protein is Galactose/methyl galactoside import ATP-binding protein MglA of Clostridium perfringens (strain SM101 / Type A).